The sequence spans 287 residues: 2' cyclic ADP-D-ribose synthase BtTIR (287 aa).

Residues 155–287 (KQYDFFISHA…DDIVENLKNL (133 aa)) form the TIR domain. Residue Glu-230 is part of the active site.

Homodimer.

It catalyses the reaction NAD(+) = 2'cADPR + nicotinamide + H(+). NAD(+) hydrolase (NADase) that cleaves NAD(+) into nicotinamide and 2' cyclic ADP-D-ribose (2'cADPR). The protein is 2' cyclic ADP-D-ribose synthase BtTIR of Bacteroides thetaiotaomicron.